The sequence spans 246 residues: 1-(5-phosphoribosyl)-5-[(5-phosphoribosylamino)methylideneamino] imidazole-4-carboxamide isomerase (246 aa).

Asp-7 functions as the Proton acceptor in the catalytic mechanism. Asp-129 functions as the Proton donor in the catalytic mechanism.

This sequence belongs to the HisA/HisF family.

Its subcellular location is the cytoplasm. The catalysed reaction is 1-(5-phospho-beta-D-ribosyl)-5-[(5-phospho-beta-D-ribosylamino)methylideneamino]imidazole-4-carboxamide = 5-[(5-phospho-1-deoxy-D-ribulos-1-ylimino)methylamino]-1-(5-phospho-beta-D-ribosyl)imidazole-4-carboxamide. It functions in the pathway amino-acid biosynthesis; L-histidine biosynthesis; L-histidine from 5-phospho-alpha-D-ribose 1-diphosphate: step 4/9. The chain is 1-(5-phosphoribosyl)-5-[(5-phosphoribosylamino)methylideneamino] imidazole-4-carboxamide isomerase from Buchnera aphidicola subsp. Acyrthosiphon pisum (strain 5A).